A 263-amino-acid polypeptide reads, in one-letter code: Neurogenin-2 (263 aa).

The interval Leu-20–Pro-76 is disordered. A compositionally biased stretch (polar residues) spans Ser-24–Ser-36. In terms of domain architecture, bHLH spans Thr-112–Leu-164. Low complexity predominate over residues Leu-197–Ser-231. Residues Leu-197–Ala-253 form a disordered region.

In terms of assembly, efficient DNA binding requires dimerization with another bHLH protein.

The protein resides in the nucleus. Transcriptional regulator. Involved in neuronal differentiation. Activates transcription by binding to the E box (5'-CANNTG-3'). The chain is Neurogenin-2 (Neurog2) from Mus musculus (Mouse).